An 891-amino-acid polypeptide reads, in one-letter code: Alanine--tRNA ligase (891 aa).

Positions 564, 568, 681, and 685 each coordinate Zn(2+).

It belongs to the class-II aminoacyl-tRNA synthetase family. The cofactor is Zn(2+).

Its subcellular location is the cytoplasm. The catalysed reaction is tRNA(Ala) + L-alanine + ATP = L-alanyl-tRNA(Ala) + AMP + diphosphate. Catalyzes the attachment of alanine to tRNA(Ala) in a two-step reaction: alanine is first activated by ATP to form Ala-AMP and then transferred to the acceptor end of tRNA(Ala). Also edits incorrectly charged Ser-tRNA(Ala) and Gly-tRNA(Ala) via its editing domain. The protein is Alanine--tRNA ligase of Methylorubrum populi (strain ATCC BAA-705 / NCIMB 13946 / BJ001) (Methylobacterium populi).